A 3971-amino-acid polypeptide reads, in one-letter code: Mycosubtilin synthase subunit A (3971 aa).

The interval 160-479 is acyl-CoA ligase; it reads EPEADELAFI…ELEDIDLGRV (320 aa). The Carrier 1 domain occupies 578–653; that stretch reads TPIHEIETAL…DLAAFLVENH (76 aa). Ser-613 is modified (O-(pantetheine 4'-phosphoryl)serine). The region spanning 669 to 1092 is the Ketosynthase family 3 (KS3) domain; it reads SKDIAIIGMS…GTNAHVVLEE (424 aa). Catalysis depends on for beta-ketoacyl synthase activity residues Cys-843, His-974, and His-1014. Residues 1290–1365 enclose the Carrier 2 domain; sequence THIESFLKTV…SVVDYLAENV (76 aa). An O-(pantetheine 4'-phosphoryl)serine modification is found at Ser-1324. The disordered stretch occupies residues 1434–1456; it reads ESEISQDKTSLSPKSVTAKKNSA. Polar residues predominate over residues 1440-1456; sequence DKTSLSPKSVTAKKNSA. The GSA-AT stretch occupies residues 1529 to 1856; it reads IIAERSDGSR…SYFEQSQVPI (328 aa). Lys-1759 carries the N6-(pyridoxal phosphate)lysine modification. The interval 1921 to 1942 is disordered; it reads GGFIPEGPDSPNDGGHKEPETY. Positions 1938 to 2240 are condensation 1; sequence EPETYELSPE…NMVPVKNTAS (303 aa). In terms of domain architecture, Carrier 3 spans 2405–2480; sequence EPENETELQI…ELANFIRGEK (76 aa). Ser-2440 is modified (O-(pantetheine 4'-phosphoryl)serine). The condensation 2 stretch occupies residues 2492-2781; that stretch reads QKAFYRTSPA…QTMGIRTKPQ (290 aa). A domain 1 (asparagine-activating) region spans residues 2937-3823; the sequence is PHNDTVCQWF…RNHPAGRKIF (887 aa). Positions 2967–3364 are adenylation 1; the sequence is TYGQLNERVN…KVEAVQKAVV (398 aa). Residues 3442 to 3517 enclose the Carrier 4 domain; that stretch reads PPGNEVESKL…QLANMALRME (76 aa). Ser-3477 is modified (O-(pantetheine 4'-phosphoryl)serine). Positions 3529-3818 are condensation 3; that stretch reads KISYYPVSSA…NTLVIRNHPA (290 aa).

Belongs to the ATP-dependent AMP-binding enzyme family. Pyridoxal 5'-phosphate is required as a cofactor. The cofactor is pantetheine 4'-phosphate.

Its function is as follows. This protein is a multifunctional enzyme, able to activate a long chain fatty acid and link it with the amino acid Asn as part of the synthesis of mycosubtilin. The activation sites consist of individual domains. This is Mycosubtilin synthase subunit A (mycA) from Bacillus subtilis.